Here is a 55-residue protein sequence, read N- to C-terminus: MAKGAREKIKLVSTANTGHFYTTDKNKRNMPGKMEIKKYDPVVRQHVLYKEAKIK.

It belongs to the bacterial ribosomal protein bL33 family.

The chain is Large ribosomal subunit protein bL33 from Aliivibrio fischeri (strain ATCC 700601 / ES114) (Vibrio fischeri).